A 419-amino-acid polypeptide reads, in one-letter code: MKRKKKEEEEEKLIVTREFAKRWRDLSGQNHWKGMLQPLDQDLREYIIHYGEMAQAGYDTFNINTESQFAGASIYSRKDFFAKVGLEIAHPYTKYKVTKFIYATSDIHVPESFLLFPISREGWSKESNWMGYVAVTDDQGTALLGRRDIVVSWRGSVQPLEWVEDFEFGLVNAIKIFGERNDQVQIHQGWYSIYMSQDERSPFTKTNARDQVLREVGRLLEKYKDEEVSITICGHSLGAALATLSATDIVANGYNRPKSRPDKSCPVTAFVFASPRVGDSDFRKLFSGLEDIRVLRTRNLPDVIPIYPPIGYSEVGDEFPIDTRKSPYMKSPGNLATFHCLEGYLHGVAGTQGTNKADLFRLDVERAIGLVNKSVDGLKDECMVPGKWRVLKNKGMAQQDDGSWELVDHEIDDNEDLDF.

Coiled-coil stretches lie at residues 1 to 21 and 207 to 227; these read MKRK…EFAK and NARD…KDEE. The Acyl-ester intermediate role is filled by S236. Residues S236, D302, and H339 each act as charge relay system in the active site.

Belongs to the AB hydrolase superfamily. Lipase family. In terms of tissue distribution, expressed in seedlings, stems and siliques, and, to a lower extent, in flowers.

The protein resides in the cytoplasm. Its function is as follows. Acylhydrolase that catalyzes the hydrolysis of 1,3-diacylglycerol (1,3-DAG) and 1-monoacylglycerol (1-MAG) at the sn-1 position. High activity toward 1,3-DAG and 1-MAG, but low activity toward 1,2-diacylglycerol (1,2-DAG) and 1-lysophosphatidylcholine (1-LPC), and no activity toward phosphatidylcholine (PC), monogalactosyldiacylglycerol (MGDG), digalactosyldiacylglycerol (DGDG), triacylglycerol (TAG) and 2-monoacylglycerol (2-MAG). May be involved in the negative regulation of seedling establishment by inhibiting the breakdown, beta-oxidation and mobilization of seed storage oils. This chain is Phospholipase A1-IIgamma (DSEL), found in Arabidopsis thaliana (Mouse-ear cress).